Here is a 120-residue protein sequence, read N- to C-terminus: Spermidine export protein MdtJ (120 aa).

Transmembrane regions (helical) follow at residues 1–21 (MFYW…TLSM), 31–51 (AGFI…SFAV), 54–74 (IALG…ITIF), and 81–101 (EALS…IVLI).

The protein belongs to the drug/metabolite transporter (DMT) superfamily. Small multidrug resistance (SMR) (TC 2.A.7.1) family. MdtJ subfamily. In terms of assembly, forms a complex with MdtI.

Its subcellular location is the cell inner membrane. Its function is as follows. Catalyzes the excretion of spermidine. In Salmonella choleraesuis (strain SC-B67), this protein is Spermidine export protein MdtJ.